Here is a 713-residue protein sequence, read N- to C-terminus: Probable glutamate carboxypeptidase VP8 (713 aa).

Over 1–10 (MPHSVLARLP) the chain is Cytoplasmic. A helical; Signal-anchor for type II membrane protein membrane pass occupies residues 11–31 (PGSVRLVAAFGLLLLVSLLVL). Residues 32-713 (HRRPGRPHVA…PTNFSSLVTP (682 aa)) lie on the Extracellular side of the membrane. Residues Asn-66 and Asn-311 are each glycosylated (N-linked (GlcNAc...) asparagine). The interval 245–539 (ATSGAERLKF…EIWGLLALRL (295 aa)) is catalytic. Zn(2+)-binding residues include His-345 and Asp-355. Glu-392 (nucleophile) is an active-site residue. Positions 393, 421, and 505 each coordinate Zn(2+). Residues Asn-667 and Asn-706 are each glycosylated (N-linked (GlcNAc...) asparagine).

It belongs to the peptidase M28 family. M28B subfamily. It depends on Zn(2+) as a cofactor.

It localises to the cell membrane. The enzyme catalyses Release of an unsubstituted, C-terminal glutamyl residue, typically from Ac-Asp-Glu or folylpoly-gamma-glutamates.. Functionally, involved in the regulation of meristem development and seed maturation processes. Mediates regulation of embryonic regulatory genes and genes controlling abscisic acid (ABA) biosynthesis and turnover in developing seeds. May be required for the synthesis of small signaling molecules that integrates meristem and embryo formation in seeds. The polypeptide is Probable glutamate carboxypeptidase VP8 (Zea mays (Maize)).